The primary structure comprises 677 residues: DNA-directed RNA polymerase subunit beta' (677 aa).

Zn(2+)-binding residues include Cys-69, Cys-71, Cys-87, and Cys-90. Residues Asp-489, Asp-491, and Asp-493 each contribute to the Mg(2+) site.

This sequence belongs to the RNA polymerase beta' chain family. RpoC1 subfamily. As to quaternary structure, in plastids the minimal PEP RNA polymerase catalytic core is composed of four subunits: alpha, beta, beta', and beta''. When a (nuclear-encoded) sigma factor is associated with the core the holoenzyme is formed, which can initiate transcription. It depends on Mg(2+) as a cofactor. The cofactor is Zn(2+).

It localises to the plastid. Its subcellular location is the chloroplast. It carries out the reaction RNA(n) + a ribonucleoside 5'-triphosphate = RNA(n+1) + diphosphate. In terms of biological role, DNA-dependent RNA polymerase catalyzes the transcription of DNA into RNA using the four ribonucleoside triphosphates as substrates. The protein is DNA-directed RNA polymerase subunit beta' of Spinacia oleracea (Spinach).